Reading from the N-terminus, the 260-residue chain is Imidazole glycerol phosphate synthase subunit HisF (260 aa).

Catalysis depends on residues Asp11 and Asp130.

Belongs to the HisA/HisF family. As to quaternary structure, heterodimer of HisH and HisF.

It localises to the cytoplasm. The enzyme catalyses 5-[(5-phospho-1-deoxy-D-ribulos-1-ylimino)methylamino]-1-(5-phospho-beta-D-ribosyl)imidazole-4-carboxamide + L-glutamine = D-erythro-1-(imidazol-4-yl)glycerol 3-phosphate + 5-amino-1-(5-phospho-beta-D-ribosyl)imidazole-4-carboxamide + L-glutamate + H(+). Its pathway is amino-acid biosynthesis; L-histidine biosynthesis; L-histidine from 5-phospho-alpha-D-ribose 1-diphosphate: step 5/9. Functionally, IGPS catalyzes the conversion of PRFAR and glutamine to IGP, AICAR and glutamate. The HisF subunit catalyzes the cyclization activity that produces IGP and AICAR from PRFAR using the ammonia provided by the HisH subunit. The polypeptide is Imidazole glycerol phosphate synthase subunit HisF (Psychrobacter cryohalolentis (strain ATCC BAA-1226 / DSM 17306 / VKM B-2378 / K5)).